Reading from the N-terminus, the 214-residue chain is Probable septum site-determining protein MinC (214 aa).

The protein belongs to the MinC family. Interacts with MinD and FtsZ.

Cell division inhibitor that blocks the formation of polar Z ring septums. Rapidly oscillates between the poles of the cell to destabilize FtsZ filaments that have formed before they mature into polar Z rings. Prevents FtsZ polymerization. This is Probable septum site-determining protein MinC from Caldanaerobacter subterraneus subsp. tengcongensis (strain DSM 15242 / JCM 11007 / NBRC 100824 / MB4) (Thermoanaerobacter tengcongensis).